A 352-amino-acid chain; its full sequence is Nicotinate-nucleotide--dimethylbenzimidazole phosphoribosyltransferase (352 aa).

Glu-318 (proton acceptor) is an active-site residue.

It belongs to the CobT family.

It catalyses the reaction 5,6-dimethylbenzimidazole + nicotinate beta-D-ribonucleotide = alpha-ribazole 5'-phosphate + nicotinate + H(+). It functions in the pathway nucleoside biosynthesis; alpha-ribazole biosynthesis; alpha-ribazole from 5,6-dimethylbenzimidazole: step 1/2. Its function is as follows. Catalyzes the synthesis of alpha-ribazole-5'-phosphate from nicotinate mononucleotide (NAMN) and 5,6-dimethylbenzimidazole (DMB). The protein is Nicotinate-nucleotide--dimethylbenzimidazole phosphoribosyltransferase of Geobacter sulfurreducens (strain ATCC 51573 / DSM 12127 / PCA).